Here is a 316-residue protein sequence, read N- to C-terminus: MSNKLAQLRKLTTVVADTGEIDAIKKYQPEDATTNPSLILKAAQIAEYAPLIDQAIAYAKTQSNDKAQQVQDTCDMLAVNIGKEILKTIPGRISTEVDARLSYDMERSVAKARQLVKMYNDAGISNDRILIKLASTWEGIRAAEILEKEGINCNLTLLFSFAQARACAEAGVFLISPFVGRIMDWYKAKEGRDFAASEDPGVLSVTKIYNYYKEHGYKTVVMGASFRNIGEILELAGCDRLTIAPSLLAELEAAEGELVAKLVDSKGSKARPAPMTHSEFLWEHNLDAMAVEKLAEGIRNFAVDQGKLEAMIAAKL.

Lysine 132 serves as the catalytic Schiff-base intermediate with substrate.

Belongs to the transaldolase family. Type 1 subfamily. In terms of assembly, homodimer.

It is found in the cytoplasm. The enzyme catalyses D-sedoheptulose 7-phosphate + D-glyceraldehyde 3-phosphate = D-erythrose 4-phosphate + beta-D-fructose 6-phosphate. It participates in carbohydrate degradation; pentose phosphate pathway; D-glyceraldehyde 3-phosphate and beta-D-fructose 6-phosphate from D-ribose 5-phosphate and D-xylulose 5-phosphate (non-oxidative stage): step 2/3. Functionally, transaldolase is important for the balance of metabolites in the pentose-phosphate pathway. This chain is Transaldolase, found in Vibrio cholerae serotype O1 (strain ATCC 39541 / Classical Ogawa 395 / O395).